Here is a 3658-residue protein sequence, read N- to C-terminus: E3 ubiquitin-protein ligase UPL2 (3658 aa).

Residues 884–893 are compositionally biased toward basic and acidic residues; it reads DEKKSVDRAS. The tract at residues 884-914 is disordered; the sequence is DEKKSVDRASDNSVSASSSTAERESDEDSSN. The segment covering 894 to 903 has biased composition (low complexity); sequence DNSVSASSST. Residues 1271–1312 form the UBA domain; that stretch reads QPDEAIVGMIVEMGFSRSRAEDALRRVGTNSVEMAMDWLFTN. Residues 1318 to 1337 form the UIM domain; that stretch reads QEDDELAQALALSLGNSSET. Disordered regions lie at residues 1331-1360, 1702-1733, 2004-2038, 2052-2072, 2113-2204, 2293-2313, 2417-2487, 2503-2591, and 2958-2987; these read LGNSSETPKLEDTEKPVDVPQEEAEPKEPP, VSGSEHGFSLNEPLGISENKLHDGSGKCSKSH, AEQLKSEVPNEQKNTDSDERHDSHGTSTSTEVDEL, VDNGQEQPQVSSQSEGERGSS, HVED…DDMV, PLFSRPSQTGNTASVSASAGS, ERET…EGGG, SAQG…PEVN, and SPSSGVPEKLENKPVGEEASSETQKDAESE. The span at 1338-1347 shows a compositional bias: basic and acidic residues; it reads PKLEDTEKPV. A compositionally biased stretch (basic and acidic residues) spans 2007–2027; sequence LKSEVPNEQKNTDSDERHDSH. Over residues 2028-2038 the composition is skewed to polar residues; it reads GTSTSTEVDEL. Acidic residues-rich tracts occupy residues 2117 to 2144 and 2156 to 2204; these read RADDDVDDDMDDEGEDDEGDDEDADSVE and DVED…DDMV. Residues 2297–2313 show a composition bias toward polar residues; that stretch reads RPSQTGNTASVSASAGS. Residues 2422-2431 are compositionally biased toward low complexity; that stretch reads TTEVQEQQQP. The segment covering 2503–2518 has biased composition (polar residues); sequence SAQGQSDTSGIQNVSV. Position 2582 is a phosphoserine (Ser2582). An HECT domain is found at 3317–3658; it reads SPQDLKGRLN…HEANEGFGFA (342 aa). Catalysis depends on Cys3625, which acts as the Glycyl thioester intermediate.

It belongs to the UPL family. TOM1/PTR1 subfamily. Widely expressed. Expressed in root, stem, cauline and rosette leaf, seedling and flower (at protein level).

The catalysed reaction is S-ubiquitinyl-[E2 ubiquitin-conjugating enzyme]-L-cysteine + [acceptor protein]-L-lysine = [E2 ubiquitin-conjugating enzyme]-L-cysteine + N(6)-ubiquitinyl-[acceptor protein]-L-lysine.. Its pathway is protein modification; protein ubiquitination. In terms of biological role, probable E3 ubiquitin-protein ligase which mediates ubiquitination and subsequent proteasomal degradation of target proteins. This Arabidopsis thaliana (Mouse-ear cress) protein is E3 ubiquitin-protein ligase UPL2 (UPL2).